The following is a 345-amino-acid chain: DNA-directed RNA polymerase subunit alpha (345 aa).

The interval 1–241 (MLRDTHLALQ…DQLGMFINFE (241 aa)) is alpha N-terminal domain (alpha-NTD). Residues 257-345 (FNPNLLRKVD…ELVKRSDNPF (89 aa)) form an alpha C-terminal domain (alpha-CTD) region.

The protein belongs to the RNA polymerase alpha chain family. As to quaternary structure, homodimer. The RNAP catalytic core consists of 2 alpha, 1 beta, 1 beta' and 1 omega subunit. When a sigma factor is associated with the core the holoenzyme is formed, which can initiate transcription.

The catalysed reaction is RNA(n) + a ribonucleoside 5'-triphosphate = RNA(n+1) + diphosphate. Functionally, DNA-dependent RNA polymerase catalyzes the transcription of DNA into RNA using the four ribonucleoside triphosphates as substrates. The polypeptide is DNA-directed RNA polymerase subunit alpha (Acidiphilium cryptum (strain JF-5)).